A 138-amino-acid chain; its full sequence is MSTLSYVSPDALKGWLMESPNEISIIDVRDYDYEGERIPGSVRIPSDTFLASVDQHVDDLMKKRSLIVHCTYSQVRGPKAARVLSEILRNRITESKEKLSLSQKEKLFQNLPTVYILHGGFSAWKRRYGGQQGLIEYD.

The Rhodanese domain maps to 19–133; it reads SPNEISIIDV…WKRRYGGQQG (115 aa). Residue cysteine 70 is the Phosphocysteine intermediate of the active site.

It belongs to the MPI phosphatase family.

It localises to the cytoplasm. The protein localises to the nucleus. It catalyses the reaction O-phospho-L-tyrosyl-[protein] + H2O = L-tyrosyl-[protein] + phosphate. In terms of biological role, may play a role in DNA replication checkpoint via regulation of hsk1 or may act downstream of hsk1 in an S phase regulatory pathway. This chain is Dual specificity phosphatase ibp1 (ibp1), found in Schizosaccharomyces pombe (strain 972 / ATCC 24843) (Fission yeast).